A 232-amino-acid polypeptide reads, in one-letter code: 26S proteasome non-ATPase regulatory subunit 10 (232 aa).

ANK repeat units follow at residues 45 to 75 (DERT…SPNT), 79 to 108 (GGWT…DPNT), 112 to 141 (SKRT…KNRK), 144 to 173 (TGSA…NINS), 177 to 206 (EGDT…DTTI), and 210 to 232 (DSKT…EFKK).

Its function is as follows. Acts as a chaperone during the assembly of the 26S proteasome, specifically of the 19S regulatory complex (RC). The chain is 26S proteasome non-ATPase regulatory subunit 10 (psmD10) from Dictyostelium discoideum (Social amoeba).